Reading from the N-terminus, the 358-residue chain is Glucose 1-dehydrogenase (358 aa).

A Zn(2+)-binding site is contributed by Cys38. Thr40 contacts substrate. Positions 65, 66, 92, 95, 98, and 106 each coordinate Zn(2+). Glu113, Glu149, and Asn153 together coordinate substrate. Glu149 is a binding site for Zn(2+). Residues 187–190, 209–211, 268–270, 296–298, and Lys342 each bind NADP(+); these read SGPI, NRR, FGT, and SVN. Asn298 contributes to the substrate binding site.

This sequence belongs to the zinc-containing alcohol dehydrogenase family. Glucose 1-dehydrogenase subfamily. Zn(2+) serves as cofactor.

It carries out the reaction D-glucose + NAD(+) = D-glucono-1,5-lactone + NADH + H(+). The enzyme catalyses D-glucose + NADP(+) = D-glucono-1,5-lactone + NADPH + H(+). In terms of biological role, catalyzes the NAD(P)(+)-dependent oxidation of D-glucose to D-gluconate via gluconolactone. Can utilize both NAD(+) and NADP(+) as electron acceptor. Is involved in the degradation of glucose through a non-phosphorylative variant of the Entner-Doudoroff pathway. This chain is Glucose 1-dehydrogenase, found in Metallosphaera sedula (strain ATCC 51363 / DSM 5348 / JCM 9185 / NBRC 15509 / TH2).